A 410-amino-acid chain; its full sequence is CinA-like protein (410 aa).

This sequence belongs to the CinA family.

In Anaeromyxobacter sp. (strain Fw109-5), this protein is CinA-like protein.